A 188-amino-acid polypeptide reads, in one-letter code: V-type ATP synthase subunit E (188 aa).

Belongs to the V-ATPase E subunit family.

Produces ATP from ADP in the presence of a proton gradient across the membrane. The sequence is that of V-type ATP synthase subunit E from Thermus thermophilus (strain ATCC BAA-163 / DSM 7039 / HB27).